The chain runs to 336 residues: Thiamine thiazole synthase (336 aa).

Substrate is bound by residues Ala-89, 110–111 (ES), Gly-118, and Cys-183. Cys-219 carries the 2,3-didehydroalanine (Cys) modification. Residues Asp-221, His-236, Met-288, and 298–300 (RMG) contribute to the substrate site.

The protein belongs to the THI4 family. Homooctamer. Requires Fe cation as cofactor. In terms of processing, during the catalytic reaction, a sulfide is transferred from Cys-219 to a reaction intermediate, generating a dehydroalanine residue.

The protein resides in the cytoplasm. The protein localises to the nucleus. It carries out the reaction [ADP-thiazole synthase]-L-cysteine + glycine + NAD(+) = [ADP-thiazole synthase]-dehydroalanine + ADP-5-ethyl-4-methylthiazole-2-carboxylate + nicotinamide + 3 H2O + 2 H(+). Its function is as follows. Involved in biosynthesis of the thiamine precursor thiazole. Catalyzes the conversion of NAD and glycine to adenosine diphosphate 5-(2-hydroxyethyl)-4-methylthiazole-2-carboxylic acid (ADT), an adenylated thiazole intermediate. The reaction includes an iron-dependent sulfide transfer from a conserved cysteine residue of the protein to a thiazole intermediate. The enzyme can only undergo a single turnover, which suggests it is a suicide enzyme. May have additional roles in adaptation to various stress conditions and in DNA damage tolerance. This is Thiamine thiazole synthase from Puccinia graminis f. sp. tritici (strain CRL 75-36-700-3 / race SCCL) (Black stem rust fungus).